The sequence spans 223 residues: 23 kDa piroplasm membrane protein (223 aa).

An N-terminal signal peptide occupies residues 1 to 19 (MHKFTKVFFVAILVHTLKS). Topologically, residues 20–197 (GLVFTPVSGT…EEEKSDKKKY (178 aa)) are extracellular. Asparagine 69 is a glycosylation site (N-linked (GlcNAc...) asparagine). Residues 198 to 218 (VLMVVVVVVFVVVASLVVFLV) traverse the membrane as a helical segment. Topologically, residues 219–223 (KFCLK) are cytoplasmic.

Its subcellular location is the membrane. This is 23 kDa piroplasm membrane protein from Theileria buffeli.